A 350-amino-acid polypeptide reads, in one-letter code: 4-hydroxy-3-methylbut-2-enyl diphosphate reductase (350 aa).

Cysteine 36 serves as a coordination point for [4Fe-4S] cluster. 2 residues coordinate (2E)-4-hydroxy-3-methylbut-2-enyl diphosphate: histidine 65 and histidine 101. Dimethylallyl diphosphate-binding residues include histidine 65 and histidine 101. Positions 65 and 101 each coordinate isopentenyl diphosphate. Cysteine 123 contributes to the [4Fe-4S] cluster binding site. Histidine 151 contacts (2E)-4-hydroxy-3-methylbut-2-enyl diphosphate. Dimethylallyl diphosphate is bound at residue histidine 151. Histidine 151 provides a ligand contact to isopentenyl diphosphate. Glutamate 153 (proton donor) is an active-site residue. Residue threonine 192 coordinates (2E)-4-hydroxy-3-methylbut-2-enyl diphosphate. Residue cysteine 222 coordinates [4Fe-4S] cluster. (2E)-4-hydroxy-3-methylbut-2-enyl diphosphate contacts are provided by serine 250, serine 251, asparagine 252, and serine 295. The dimethylallyl diphosphate site is built by serine 250, serine 251, asparagine 252, and serine 295. Residues serine 250, serine 251, asparagine 252, and serine 295 each coordinate isopentenyl diphosphate.

This sequence belongs to the IspH family. Requires [4Fe-4S] cluster as cofactor.

It catalyses the reaction isopentenyl diphosphate + 2 oxidized [2Fe-2S]-[ferredoxin] + H2O = (2E)-4-hydroxy-3-methylbut-2-enyl diphosphate + 2 reduced [2Fe-2S]-[ferredoxin] + 2 H(+). The enzyme catalyses dimethylallyl diphosphate + 2 oxidized [2Fe-2S]-[ferredoxin] + H2O = (2E)-4-hydroxy-3-methylbut-2-enyl diphosphate + 2 reduced [2Fe-2S]-[ferredoxin] + 2 H(+). The protein operates within isoprenoid biosynthesis; dimethylallyl diphosphate biosynthesis; dimethylallyl diphosphate from (2E)-4-hydroxy-3-methylbutenyl diphosphate: step 1/1. It participates in isoprenoid biosynthesis; isopentenyl diphosphate biosynthesis via DXP pathway; isopentenyl diphosphate from 1-deoxy-D-xylulose 5-phosphate: step 6/6. Its function is as follows. Catalyzes the conversion of 1-hydroxy-2-methyl-2-(E)-butenyl 4-diphosphate (HMBPP) into a mixture of isopentenyl diphosphate (IPP) and dimethylallyl diphosphate (DMAPP). Acts in the terminal step of the DOXP/MEP pathway for isoprenoid precursor biosynthesis. This Rhizobium meliloti (strain 1021) (Ensifer meliloti) protein is 4-hydroxy-3-methylbut-2-enyl diphosphate reductase.